A 328-amino-acid polypeptide reads, in one-letter code: Dolichyl-diphosphooligosaccharide--protein glycosyltransferase subunit MAGT1 (328 aa).

Positions 1 to 22 (MAALPVLVLVLLLACGGPRAAG) are cleaved as a signal peptide. The Extracellular portion of the chain corresponds to 23-177 (QKRKEMVLSE…DVNIRVIRPP (155 aa)). In terms of domain architecture, Thioredoxin spans 40–168 (WTSKRSVIRM…LARWVADRTD (129 aa)). A glycan (N-linked (GlcNAc...) asparagine) is linked at Asn64. A disulfide bridge connects residues Cys80 and Cys83. The helical transmembrane segment at 178 to 198 (NYAGPLMLGLLLAVIGGLVYL) threads the bilayer. Residues 199-211 (RGSNLDFLYNKTG) are Cytoplasmic-facing. The chain crosses the membrane as a helical span at residues 212 to 232 (WAFAALCFVLAMTSGQMWNHI). The Extracellular portion of the chain corresponds to 233–257 (RGPPYAHKNPHTGQVNYIHGSSQAQ). Residues 258 to 278 (FVAETHIVLLFNGGVTLGMVL) traverse the membrane as a helical segment. The Cytoplasmic segment spans residues 279 to 293 (LHEAATSDMDVGKRK). Residues 294–314 (IMCIAGIGLVVFFFSWLLSVF) traverse the membrane as a helical segment. The Extracellular segment spans residues 315–328 (RSKYHGYPYSFLMS).

Belongs to the OST3/OST6 family. Accessory component of the STT3B-containing form of the oligosaccharyltransferase (OST) complex. OST exists in two different complex forms which contain common core subunits RPN1, RPN2, OST48, OST4, DAD1 and TMEM258, either STT3A or STT3B as catalytic subunits, and form-specific accessory subunits. OST can form stable complexes with the Sec61 complex or with both the Sec61 and TRAP complexes.

The protein resides in the cell membrane. The protein localises to the endoplasmic reticulum. It is found in the endoplasmic reticulum membrane. It functions in the pathway protein modification; protein glycosylation. Functionally, accessory component of the STT3B-containing form of the N-oligosaccharyl transferase (OST) complex which catalyzes the transfer of a high mannose oligosaccharide from a lipid-linked oligosaccharide donor to an asparagine residue within an Asn-X-Ser/Thr consensus motif in nascent polypeptide chains. Involved in N-glycosylation of STT3B-dependent substrates. Specifically required for the glycosylation of a subset of acceptor sites that are near cysteine residues; in this function seems to act redundantly with TUSC3. In its oxidized form proposed to form transient mixed disulfides with a glycoprotein substrate to facilitate access of STT3B to the unmodified acceptor site. Also has oxidoreductase-independent functions in the STT3B-containing OST complex possibly involving substrate recognition. Could indirectly play a role in Mg(2+) transport in epithelial cells. The chain is Dolichyl-diphosphooligosaccharide--protein glycosyltransferase subunit MAGT1 from Gallus gallus (Chicken).